The sequence spans 119 residues: UPF0102 protein MS1289 (119 aa).

This sequence belongs to the UPF0102 family.

The chain is UPF0102 protein MS1289 from Mannheimia succiniciproducens (strain KCTC 0769BP / MBEL55E).